The primary structure comprises 616 residues: Dihydroxy-acid dehydratase (616 aa).

A Mg(2+)-binding site is contributed by Asp81. Cys122 is a binding site for [2Fe-2S] cluster. 2 residues coordinate Mg(2+): Asp123 and Lys124. Position 124 is an N6-carboxylysine (Lys124). A [2Fe-2S] cluster-binding site is contributed by Cys195. Glu491 is a Mg(2+) binding site. Catalysis depends on Ser517, which acts as the Proton acceptor.

It belongs to the IlvD/Edd family. Homodimer. It depends on [2Fe-2S] cluster as a cofactor. Mg(2+) is required as a cofactor.

It carries out the reaction (2R)-2,3-dihydroxy-3-methylbutanoate = 3-methyl-2-oxobutanoate + H2O. The enzyme catalyses (2R,3R)-2,3-dihydroxy-3-methylpentanoate = (S)-3-methyl-2-oxopentanoate + H2O. It functions in the pathway amino-acid biosynthesis; L-isoleucine biosynthesis; L-isoleucine from 2-oxobutanoate: step 3/4. Its pathway is amino-acid biosynthesis; L-valine biosynthesis; L-valine from pyruvate: step 3/4. In terms of biological role, functions in the biosynthesis of branched-chain amino acids. Catalyzes the dehydration of (2R,3R)-2,3-dihydroxy-3-methylpentanoate (2,3-dihydroxy-3-methylvalerate) into 2-oxo-3-methylpentanoate (2-oxo-3-methylvalerate) and of (2R)-2,3-dihydroxy-3-methylbutanoate (2,3-dihydroxyisovalerate) into 2-oxo-3-methylbutanoate (2-oxoisovalerate), the penultimate precursor to L-isoleucine and L-valine, respectively. The sequence is that of Dihydroxy-acid dehydratase from Shewanella loihica (strain ATCC BAA-1088 / PV-4).